We begin with the raw amino-acid sequence, 298 residues long: Tyrosine recombinase XerD (298 aa).

One can recognise a Core-binding (CB) domain in the interval 3 to 88; it reads ALDHPLIDQF…GLRGFFRYLL (86 aa). Residues 109–292 enclose the Tyr recombinase domain; that stretch reads PLPKSLSEAD…AKARLQQLHA (184 aa). Residues arginine 149, lysine 173, histidine 244, arginine 247, and histidine 270 contribute to the active site. Tyrosine 279 serves as the catalytic O-(3'-phospho-DNA)-tyrosine intermediate.

Belongs to the 'phage' integrase family. XerD subfamily. Forms a cyclic heterotetrameric complex composed of two molecules of XerC and two molecules of XerD.

The protein resides in the cytoplasm. In terms of biological role, site-specific tyrosine recombinase, which acts by catalyzing the cutting and rejoining of the recombining DNA molecules. The XerC-XerD complex is essential to convert dimers of the bacterial chromosome into monomers to permit their segregation at cell division. It also contributes to the segregational stability of plasmids. In Pseudomonas putida (strain ATCC 47054 / DSM 6125 / CFBP 8728 / NCIMB 11950 / KT2440), this protein is Tyrosine recombinase XerD.